Here is a 638-residue protein sequence, read N- to C-terminus: Autolysin (638 aa).

Positions 1–28 are cleaved as a signal peptide; the sequence is MSLATRRFGAAAALLVAACVLCTAPAWA. A propeptide spans 29–183 (activation peptide); the sequence is QNETTGTGMV…LKSILKGSQK (155 aa). The N-linked (GlcNAc...) asparagine glycan is linked to Asn-30. A Cysteine switch motif is present at residues 95-102; it reads PRCNVPRA. Cys-97 is a binding site for Zn(2+). N-linked (GlcNAc...) asparagine glycosylation is present at Asn-126. The segment at 269-292 is disordered; the sequence is VTPPPRPPRPPRPPPRAGSTISSL. Positions 270–284 are enriched in pro residues; it reads TPPPRPPRPPRPPPR. The N-linked (GlcNAc...) asparagine glycan is linked to Asn-296. His-396 contacts Zn(2+). Residue Glu-397 is part of the active site. Positions 400 and 406 each coordinate Zn(2+). N-linked (GlcNAc...) asparagine glycans are attached at residues Asn-458, Asn-465, Asn-470, and Asn-523.

This sequence belongs to the peptidase M11 family. The cofactor is Zn(2+). Post-translationally, present in 2 forms: an inactive V-form in vegetative cells and an active and soluble G-form. The V-form enzyme may be converted to the G-form enzyme during gametic differentiation under nitrogen-starved conditions.

The protein resides in the periplasm. It is found in the secreted. Its subcellular location is the cell wall. The catalysed reaction is Cleavage of the proline- and hydroxyproline-rich proteins of the Chlamydomonas cell wall. Also cleaves azocasein, gelatin and Leu-Trp-Met-|-Arg-Phe-Ala.. Functionally, mediates digestion of the cell walls of the 2 mating type gametes during mating as a necessary prelude to cell fusion. This enzyme acts specifically on the framework proteins (inner wall) of the cell wall, cleaving several model peptides at specific sites. In Chlamydomonas reinhardtii (Chlamydomonas smithii), this protein is Autolysin.